The chain runs to 1031 residues: MNRTHMPNNHKIHEGINMKSSINEVKKSKRIEKELSYVTNSTKKKSKKKQTNIKKIGDVSVNIENINIPNNLNLYTDNESVVSSKYKKKKKKKKKLNIYNNNDNSKYLKPQVVKKKNSKIIFLHHNENNTSTHSGESSKFQKLKKKKKIKKGTKKKSINKISILKHKSHESFPSTQNENTPELEPKQVNLSPLEIEINKTNDIDKHGLEINKTPSTQNFNDPINNLDNNEKIKDRGLFHGIDNIYENYITNDKENMQSVIKNRHYIIDKNEQNEQAYNNDMNITNFIKNGNTNKNSNNDKSANSNDYNKNLFCELTEAIENDGIEQTCNRNINIRLKEEKEAEEEERKKNEDEHILENGKSNNEDNSFDKKDDLTNLGKSFKNNESFELNSPQKNIRKGSLDGMRKKKISEKKMKTKIKQKKKRQNNINDTTIGKKKIYIKENNNERKSSGLILGFKKMKKKLSGKRIDQKKEYKEKEIYSDKLKDVIKDKKKYKKKDIDDISFTKDIVKENVKGVDRDDDEKKRKTIGQDEEKEKIEIIIVKKNETGTEEEIKVETDENPKVKTKEKCKIENGEGCKIAIDEENSVFVEAENMKNEAKLEADVIIIEDAELRKDEEEDKSKNNEKDSKSEERDILETQMAGKEEKPVLKKKKKNKGKQRNREGKGVVEKGYDAKREKKENEEKNKANTKMEPNDSIEQKDKLSNVQNMSNIVKNNKVNKILEKYIISKKEENLKRKYMNTKKFMDILDISEKKFKIDTINFFPHTIGQVCYSDIYFFFDTYEKELKKSNTGKNTIKLMKKLFKCEYIEMNNMELILQIFDKIIDKLKKELKTESIVKIYDEEEHVIASKIMKYKNGNYDKYMYNKKKYDSNNEYSISENNLFNQNPLHHQNNLFGCNRNKLYNIIFNSSQGEYIMGSHSFLILQQWNDEYKLAMLRDKLEQIKKRKQNMNDPIAKYIKSLKYGFIDSLFSICCLYDCKKNDNDASYCDFPLPSQNTFYTNTQIHLDNMNLNSERILPMKITKAVQILASS.

Disordered stretches follow at residues 125-184 (HNEN…PELE), 340-405 (KEAE…DGMR), and 609-697 (DAEL…NDSI). Over residues 141–168 (QKLKKKKKIKKGTKKKSINKISILKHKS) the composition is skewed to basic residues. Positions 171–180 (SFPSTQNENT) are enriched in polar residues. Basic and acidic residues predominate over residues 340 to 357 (KEAEEEERKKNEDEHILE). Residues 377–394 (LGKSFKNNESFELNSPQK) are compositionally biased toward polar residues. Positions 581-646 (IDEENSVFVE…ETQMAGKEEK (66 aa)) form a coiled coil. The span at 610–648 (AELRKDEEEDKSKNNEKDSKSEERDILETQMAGKEEKPV) shows a compositional bias: basic and acidic residues. The span at 649–659 (LKKKKKNKGKQ) shows a compositional bias: basic residues. Residues 660-686 (RNREGKGVVEKGYDAKREKKENEEKNK) are compositionally biased toward basic and acidic residues.

In terms of biological role, in the mosquito vector midgut, plays a role in ookinete development. In Plasmodium berghei (strain Anka), this protein is Ookinete maturation protein 1.